The primary structure comprises 1377 residues: Hemoglobin-binding protease hbp autotransporter (1377 aa).

An N-terminal signal peptide occupies residues 1 to 52; it reads MNRIYSLRYSAVARGFIAVSEFARKCVHKSVRRLCFPVLLLIPVLFSAGSLA. The Peptidase S6 domain maps to 53–302; the sequence is GTVNNELGYQ…AVIPLDFIGQ (250 aa). Catalysis depends on charge relay system residues His-125, Asp-153, and Ser-259. One can recognise an Autotransporter domain in the interval 1111–1377; the sequence is DINGEAGTWV…AINANIRYSF (267 aa).

In terms of processing, cleaved to release the mature protein from the outer membrane.

Its subcellular location is the periplasm. The protein resides in the secreted. It localises to the cell surface. The protein localises to the cell outer membrane. Its activity is regulated as follows. Protease activity is inhibited by 3,4-dichloroisocoumarin. Its function is as follows. Interacts with hemoglobin, degrades it and subsequently binds the released heme. Could make heme accessible not only for E.coli, but also for B.fragilis during mixed intra-abdominal infections. Has a role in abscess formation. This chain is Hemoglobin-binding protease hbp autotransporter (hbp), found in Escherichia coli.